A 343-amino-acid chain; its full sequence is Heat-inducible transcription repressor HrcA (343 aa).

It belongs to the HrcA family.

Negative regulator of class I heat shock genes (grpE-dnaK-dnaJ and groELS operons). Prevents heat-shock induction of these operons. The polypeptide is Heat-inducible transcription repressor HrcA (Clostridium botulinum (strain Eklund 17B / Type B)).